Here is a 435-residue protein sequence, read N- to C-terminus: tRNA(Ile)-lysidine synthase (435 aa).

Residue 24 to 29 (SGGLDS) participates in ATP binding.

It belongs to the tRNA(Ile)-lysidine synthase family.

It localises to the cytoplasm. It carries out the reaction cytidine(34) in tRNA(Ile2) + L-lysine + ATP = lysidine(34) in tRNA(Ile2) + AMP + diphosphate + H(+). Its function is as follows. Ligates lysine onto the cytidine present at position 34 of the AUA codon-specific tRNA(Ile) that contains the anticodon CAU, in an ATP-dependent manner. Cytidine is converted to lysidine, thus changing the amino acid specificity of the tRNA from methionine to isoleucine. The polypeptide is tRNA(Ile)-lysidine synthase (Chromobacterium violaceum (strain ATCC 12472 / DSM 30191 / JCM 1249 / CCUG 213 / NBRC 12614 / NCIMB 9131 / NCTC 9757 / MK)).